The following is a 257-amino-acid chain: Undecaprenyl-diphosphatase (257 aa).

The next 8 membrane-spanning stretches (helical) occupy residues 4–24 (LFKAIILGIIQGITEFLPISS), 51–71 (HVGTLISLLYCFWKDWINIFF), 78–98 (LFIIIGTIPAGIAGIAFHDLI), 106–126 (LIIVVTLILVGFLMLYAEKVG), 133–153 (ITLSDAVVIGTAQAIALIPGV), 171–191 (AYAAKFSFLLSTPAIAGAAML), 207–227 (LFIIGVISAAITGIIAIKFLL), and 235–255 (LNLFIYYRWFLAVVIFLLYFF).

The protein belongs to the UppP family.

It localises to the cell inner membrane. It carries out the reaction di-trans,octa-cis-undecaprenyl diphosphate + H2O = di-trans,octa-cis-undecaprenyl phosphate + phosphate + H(+). Catalyzes the dephosphorylation of undecaprenyl diphosphate (UPP). Confers resistance to bacitracin. In Thermodesulfovibrio yellowstonii (strain ATCC 51303 / DSM 11347 / YP87), this protein is Undecaprenyl-diphosphatase.